Consider the following 71-residue polypeptide: Equinin B (71 aa).

An N-terminal signal peptide occupies residues 1–11 (MAVIMVDQAEG). A propeptide spanning residues 46–71 (GDEPQQMALDDESDPLVILPNNYNDY) is cleaved from the precursor.

Contains 4 disulfide bonds.

The protein localises to the secreted. Its subcellular location is the target cell membrane. Functionally, antimicrobial peptide with inhibitory activity against both Gram-positive and Gram-negative bacteria (E.coli (MIC=0.25 ug/ml), M.lysodeikticus (MIC=0.25 ug/ml), and V.alginolyticus (MIC=0.25 ug/ml)). Does not show hemolytic activity. The protein is Equinin B of Actinia equina (Beadlet anemone).